We begin with the raw amino-acid sequence, 229 residues long: Small ribosomal subunit protein uS3 (229 aa).

Residues 39-109 (MRKYIKEQLM…QVNIDIVEIR (71 aa)) enclose the KH type-2 domain. The disordered stretch occupies residues 210 to 229 (VVSQQNSRPSGPRGPRRPRA).

It belongs to the universal ribosomal protein uS3 family. As to quaternary structure, part of the 30S ribosomal subunit. Forms a tight complex with proteins S10 and S14.

Its function is as follows. Binds the lower part of the 30S subunit head. Binds mRNA in the 70S ribosome, positioning it for translation. This Akkermansia muciniphila (strain ATCC BAA-835 / DSM 22959 / JCM 33894 / BCRC 81048 / CCUG 64013 / CIP 107961 / Muc) protein is Small ribosomal subunit protein uS3.